We begin with the raw amino-acid sequence, 381 residues long: Lipid-A-disaccharide synthase (381 aa).

It belongs to the LpxB family.

It carries out the reaction 2-N,3-O-bis[(3R)-3-hydroxytetradecanoyl]-alpha-D-glucosaminyl 1-phosphate + UDP-2-N,3-O-bis[(3R)-3-hydroxytetradecanoyl]-alpha-D-glucosamine = lipid A disaccharide (E. coli) + UDP + H(+). It catalyses the reaction a lipid X + a UDP-2-N,3-O-bis[(3R)-3-hydroxyacyl]-alpha-D-glucosamine = a lipid A disaccharide + UDP + H(+). The protein operates within glycolipid biosynthesis; lipid IV(A) biosynthesis; lipid IV(A) from (3R)-3-hydroxytetradecanoyl-[acyl-carrier-protein] and UDP-N-acetyl-alpha-D-glucosamine: step 5/6. Functionally, condensation of UDP-2,3-diacylglucosamine and 2,3-diacylglucosamine-1-phosphate to form lipid A disaccharide, a precursor of lipid A, a phosphorylated glycolipid that anchors the lipopolysaccharide to the outer membrane of the cell. This chain is Lipid-A-disaccharide synthase, found in Erwinia tasmaniensis (strain DSM 17950 / CFBP 7177 / CIP 109463 / NCPPB 4357 / Et1/99).